The primary structure comprises 393 residues: MKRPLRRPFAVLLFVVLCAAASFPSVLRRSVGPAPVLAPLPPLDPARLNATLLRLAAADPSEAPLRRDVDDLLEGRLPASSARARAWRLRGDRLHLHLRHHQFPVYRRGHHPDHDHDPLLHPLPRQELHLDPSLRRALRSWHRLRRHDPGVLRNLPSLLSLPGRIPSCAVVGNSGILLGASHGALIDSHAAVFRLNNARISGFAANVGAKTNLSFINSNVLHLCARRPNCFCHPYGDGVPILLYICQAAHFLDVASCNASSRSLHAASISVTDPRLDVLCARIVKYYSLRRFVAETGRAAEEWSSTRDAAMFHYSSGMQAIMVAVGVCDRVSVFGFGKAADAKHHYHSNQKAELDLHDYKAEYAFYRDLADRPEVVPFLNDAGIAVPPVVFYH.

At 1–8 the chain is on the cytoplasmic side; the sequence is MKRPLRRP. Residues 9–27 traverse the membrane as a helical; Signal-anchor for type II membrane protein segment; it reads FAVLLFVVLCAAASFPSVL. Topologically, residues 28 to 393 are lumenal; that stretch reads RRSVGPAPVL…IAVPPVVFYH (366 aa). Residues Asn49, Asn212, and Asn258 are each glycosylated (N-linked (GlcNAc...) asparagine).

Belongs to the glycosyltransferase 29 family. In terms of tissue distribution, expressed in leaves and stalks. Expressed at low levels in roots.

The protein localises to the golgi apparatus membrane. Functionally, possesses sialyltransferase-like activity in vitro. Transfers sialic acid to the oligosaccharide Gal-beta-1,3-GalNAc and to glycoproteins such as asialofetuin, alpha-1-acid glycoprotein (NeuAc-alpha-2,3-Gal-beta-1,3-GalNAc-) and andasialo-alpha-1-acid glycoprotein. The transferred sialic acid is linked to galactose of Gal-beta-1,3-GalNAc through alpha-2,6-linkage. The chain is Sialyltransferase-like protein 1 from Oryza sativa subsp. japonica (Rice).